Consider the following 393-residue polypeptide: S-adenosylmethionine synthase 2 (393 aa).

Glu-9 is a binding site for Mg(2+). His-15 serves as a coordination point for ATP. K(+) is bound at residue Glu-43. L-methionine contacts are provided by Glu-56 and Gln-99. ATP contacts are provided by residues 167-169 (DGK), 235-238 (SGRF), Asp-246, 252-253 (RK), Ala-269, Lys-273, and Lys-277. Asp-246 lines the L-methionine pocket. Residue Lys-277 coordinates L-methionine.

The protein belongs to the AdoMet synthase family. In terms of assembly, homotetramer. Requires Mn(2+) as cofactor. Mg(2+) serves as cofactor. It depends on Co(2+) as a cofactor. K(+) is required as a cofactor. Mostly expressed in flowers, seedpods and roots, and, to a lower extent, in stems and leaves.

Its subcellular location is the cytoplasm. The catalysed reaction is L-methionine + ATP + H2O = S-adenosyl-L-methionine + phosphate + diphosphate. It functions in the pathway amino-acid biosynthesis; S-adenosyl-L-methionine biosynthesis; S-adenosyl-L-methionine from L-methionine: step 1/1. In terms of biological role, catalyzes the formation of S-adenosylmethionine from methionine and ATP. The reaction comprises two steps that are both catalyzed by the same enzyme: formation of S-adenosylmethionine (AdoMet) and triphosphate, and subsequent hydrolysis of the triphosphate. The polypeptide is S-adenosylmethionine synthase 2 (MSAMS2) (Brassica juncea (Indian mustard)).